The primary structure comprises 92 residues: Small ribosomal subunit protein uS19c (92 aa).

Belongs to the universal ribosomal protein uS19 family.

Its subcellular location is the plastid. The protein localises to the chloroplast. In terms of biological role, protein S19 forms a complex with S13 that binds strongly to the 16S ribosomal RNA. This is Small ribosomal subunit protein uS19c from Nandina domestica (Heavenly bamboo).